A 154-amino-acid chain; its full sequence is MKTISVKPADVEKKWVVIDAEGAVVGRLAAYVATRLRGKHRPDYTPHVDMGDNIIIVNADKVVFTGKKRDDKRYYHHTGHPGGIKETSPAKILDGRFPERVVEKAVLRMLPKDSPLARQQYSNLRVYAGPDHKHEAQQPEVVDFKSMNSKNTRG.

Residues 131–154 (DHKHEAQQPEVVDFKSMNSKNTRG) are disordered.

The protein belongs to the universal ribosomal protein uL13 family. As to quaternary structure, part of the 50S ribosomal subunit.

This protein is one of the early assembly proteins of the 50S ribosomal subunit, although it is not seen to bind rRNA by itself. It is important during the early stages of 50S assembly. This Maricaulis maris (strain MCS10) (Caulobacter maris) protein is Large ribosomal subunit protein uL13.